We begin with the raw amino-acid sequence, 418 residues long: CinA-like protein (418 aa).

Belongs to the CinA family.

The polypeptide is CinA-like protein (Cytophaga hutchinsonii (strain ATCC 33406 / DSM 1761 / CIP 103989 / NBRC 15051 / NCIMB 9469 / D465)).